The chain runs to 153 residues: Bacteriohemerythrin (153 aa).

Residues H21, H57, E61, H76, H80, H115, and D120 each contribute to the Fe cation site.

The protein belongs to the hemerythrin family. Monomer.

Its function is as follows. Oxygen-binding protein. May be involved in a storage mechanism or for delivery to oxygen-requiring enzymes. The oxygen-binding site contains two iron atoms. This chain is Bacteriohemerythrin, found in Pseudomonas paraeruginosa (strain DSM 24068 / PA7) (Pseudomonas aeruginosa (strain PA7)).